The sequence spans 660 residues: 1-deoxy-D-xylulose-5-phosphate synthase (660 aa).

Thiamine diphosphate is bound by residues His-86 and 127–129 (AHS). Asp-164 contacts Mg(2+). Thiamine diphosphate contacts are provided by residues 165–166 (GS), Asn-196, Tyr-306, and Glu-388. Asn-196 contributes to the Mg(2+) binding site.

Belongs to the transketolase family. DXPS subfamily. In terms of assembly, homodimer. Requires Mg(2+) as cofactor. Thiamine diphosphate serves as cofactor.

The catalysed reaction is D-glyceraldehyde 3-phosphate + pyruvate + H(+) = 1-deoxy-D-xylulose 5-phosphate + CO2. The protein operates within metabolic intermediate biosynthesis; 1-deoxy-D-xylulose 5-phosphate biosynthesis; 1-deoxy-D-xylulose 5-phosphate from D-glyceraldehyde 3-phosphate and pyruvate: step 1/1. Its function is as follows. Catalyzes the acyloin condensation reaction between C atoms 2 and 3 of pyruvate and glyceraldehyde 3-phosphate to yield 1-deoxy-D-xylulose-5-phosphate (DXP). The polypeptide is 1-deoxy-D-xylulose-5-phosphate synthase (Gluconobacter oxydans (strain 621H) (Gluconobacter suboxydans)).